A 258-amino-acid chain; its full sequence is Acetylglutamate kinase (258 aa).

Substrate is bound by residues 41–42, arginine 63, and asparagine 156; that span reads GG.

It belongs to the acetylglutamate kinase family. ArgB subfamily.

Its subcellular location is the cytoplasm. The catalysed reaction is N-acetyl-L-glutamate + ATP = N-acetyl-L-glutamyl 5-phosphate + ADP. It participates in amino-acid biosynthesis; L-arginine biosynthesis; N(2)-acetyl-L-ornithine from L-glutamate: step 2/4. Its function is as follows. Catalyzes the ATP-dependent phosphorylation of N-acetyl-L-glutamate. In Bacillus licheniformis (strain ATCC 14580 / DSM 13 / JCM 2505 / CCUG 7422 / NBRC 12200 / NCIMB 9375 / NCTC 10341 / NRRL NRS-1264 / Gibson 46), this protein is Acetylglutamate kinase.